Here is a 355-residue protein sequence, read N- to C-terminus: Serum paraoxonase/arylesterase 1 (355 aa).

Cys42 and Cys353 are oxidised to a cystine. Positions 53 and 54 each coordinate Ca(2+). His115 functions as the Proton acceptor in the catalytic mechanism. Ca(2+)-binding residues include Ile117, Asn168, Asp169, and Asn224. Asn253 is a glycosylation site (N-linked (GlcNAc...) asparagine). Residues Asp269 and Asn270 each coordinate Ca(2+). N-linked (GlcNAc...) asparagine glycans are attached at residues Asn270 and Asn324.

This sequence belongs to the paraoxonase family. Homodimer. Interacts with CLU. The cofactor is Ca(2+). The signal sequence is not cleaved. In terms of tissue distribution, plasma, liver, kidney, heart, brain, small intestine and lung. In the plasma, associated with HDL.

The protein resides in the secreted. It is found in the extracellular space. It catalyses the reaction a phenyl acetate + H2O = a phenol + acetate + H(+). The enzyme catalyses An aryl dialkyl phosphate + H2O = dialkyl phosphate + an aryl alcohol.. The catalysed reaction is an N-acyl-L-homoserine lactone + H2O = an N-acyl-L-homoserine + H(+). Functionally, hydrolyzes the toxic metabolites of a variety of organophosphorus insecticides. Capable of hydrolyzing a broad spectrum of organophosphate substrates and lactones, and a number of aromatic carboxylic acid esters. Mediates an enzymatic protection of low density lipoproteins against oxidative modification. The chain is Serum paraoxonase/arylesterase 1 (Pon1) from Mus musculus (Mouse).